Here is a 357-residue protein sequence, read N- to C-terminus: 3-isopropylmalate dehydrogenase (357 aa).

76–89 is a binding site for NAD(+); the sequence is GPQWDTIDPALRPE. Arg96, Arg106, Arg134, and Asp224 together coordinate substrate. Mg(2+)-binding residues include Asp224, Asp248, and Asp252. Residue 282–294 participates in NAD(+) binding; that stretch reads GSAPDIAGQGVAN.

Belongs to the isocitrate and isopropylmalate dehydrogenases family. LeuB type 1 subfamily. As to quaternary structure, homodimer. The cofactor is Mg(2+). Mn(2+) is required as a cofactor.

Its subcellular location is the cytoplasm. It carries out the reaction (2R,3S)-3-isopropylmalate + NAD(+) = 4-methyl-2-oxopentanoate + CO2 + NADH. It participates in amino-acid biosynthesis; L-leucine biosynthesis; L-leucine from 3-methyl-2-oxobutanoate: step 3/4. In terms of biological role, catalyzes the oxidation of 3-carboxy-2-hydroxy-4-methylpentanoate (3-isopropylmalate) to 3-carboxy-4-methyl-2-oxopentanoate. The product decarboxylates to 4-methyl-2 oxopentanoate. This is 3-isopropylmalate dehydrogenase from Xylella fastidiosa (strain Temecula1 / ATCC 700964).